A 300-amino-acid polypeptide reads, in one-letter code: Ribosomal RNA small subunit methyltransferase H (300 aa).

Residues 36 to 38 (GGH), Asp55, Leu89, Asp103, and Gln110 each bind S-adenosyl-L-methionine.

This sequence belongs to the methyltransferase superfamily. RsmH family.

It localises to the cytoplasm. It catalyses the reaction cytidine(1402) in 16S rRNA + S-adenosyl-L-methionine = N(4)-methylcytidine(1402) in 16S rRNA + S-adenosyl-L-homocysteine + H(+). Its function is as follows. Specifically methylates the N4 position of cytidine in position 1402 (C1402) of 16S rRNA. The protein is Ribosomal RNA small subunit methyltransferase H of Thermotoga neapolitana (strain ATCC 49049 / DSM 4359 / NBRC 107923 / NS-E).